Reading from the N-terminus, the 255-residue chain is Thiazole synthase (255 aa).

K97 serves as the catalytic Schiff-base intermediate with DXP. Residues G158, 184-185, and 206-207 each bind 1-deoxy-D-xylulose 5-phosphate; these read AG and NT.

The protein belongs to the ThiG family. Homotetramer. Forms heterodimers with either ThiH or ThiS.

It localises to the cytoplasm. It carries out the reaction [ThiS sulfur-carrier protein]-C-terminal-Gly-aminoethanethioate + 2-iminoacetate + 1-deoxy-D-xylulose 5-phosphate = [ThiS sulfur-carrier protein]-C-terminal Gly-Gly + 2-[(2R,5Z)-2-carboxy-4-methylthiazol-5(2H)-ylidene]ethyl phosphate + 2 H2O + H(+). It functions in the pathway cofactor biosynthesis; thiamine diphosphate biosynthesis. In terms of biological role, catalyzes the rearrangement of 1-deoxy-D-xylulose 5-phosphate (DXP) to produce the thiazole phosphate moiety of thiamine. Sulfur is provided by the thiocarboxylate moiety of the carrier protein ThiS. In vitro, sulfur can be provided by H(2)S. This is Thiazole synthase from Moorella thermoacetica (strain ATCC 39073 / JCM 9320).